Reading from the N-terminus, the 207-residue chain is MPNYKLLYFDARALAEPIRIMFAMLNVPYEDYRVSVEEWSKLKPTTPFGQLPILQVDGEQFGQSMSITRYLARKFGLAGKTAEEEAYADSIVDQYRDFIFFFRQFTSSVFYGSDADHINKVRFEVVEPARDDFLAIINKFLAKSKSGFLVGDSLTWADIVIADNLTSLLKNGFLDFNKEKKLEEFYNKIHSIPEIKNYVATRKDSIV.

The GST N-terminal domain occupies Pro-2–Gly-79. Residues Tyr-8, Trp-39, Lys-43, Gly-49–Leu-51, and Gln-63–Ser-64 contribute to the glutathione site. The 127-residue stretch at Thr-81–Val-207 folds into the GST C-terminal domain.

The protein belongs to the GST superfamily. Sigma family.

It catalyses the reaction RX + glutathione = an S-substituted glutathione + a halide anion + H(+). In terms of biological role, conjugation of reduced glutathione to a wide number of exogenous and endogenous hydrophobic electrophiles. May play a role in the detoxification of reactive oxygen species produced during pathogenic bacterial infection. This Caenorhabditis elegans protein is Glutathione S-transferase 4.